The chain runs to 108 residues: Phosphoribosyl-ATP pyrophosphatase (108 aa).

The protein belongs to the PRA-PH family.

Its subcellular location is the cytoplasm. It catalyses the reaction 1-(5-phospho-beta-D-ribosyl)-ATP + H2O = 1-(5-phospho-beta-D-ribosyl)-5'-AMP + diphosphate + H(+). It functions in the pathway amino-acid biosynthesis; L-histidine biosynthesis; L-histidine from 5-phospho-alpha-D-ribose 1-diphosphate: step 2/9. In Pelobacter propionicus (strain DSM 2379 / NBRC 103807 / OttBd1), this protein is Phosphoribosyl-ATP pyrophosphatase.